Here is a 177-residue protein sequence, read N- to C-terminus: dCTP deaminase (177 aa).

DCTP contacts are provided by residues 100–105 (RSSIAR) and aspartate 116. The active-site Proton donor/acceptor is the glutamate 126. 2 residues coordinate dCTP: tyrosine 159 and glutamine 166.

Belongs to the dCTP deaminase family. Homotrimer.

The catalysed reaction is dCTP + H2O + H(+) = dUTP + NH4(+). It participates in pyrimidine metabolism; dUMP biosynthesis; dUMP from dCTP (dUTP route): step 1/2. In terms of biological role, catalyzes the deamination of dCTP to dUTP. The protein is dCTP deaminase of Korarchaeum cryptofilum (strain OPF8).